The primary structure comprises 60 residues: MDCACATGGSCSCAGSCKCENCKCTSCKKSCCSCCPSECEKCGQGCVCKGGSSEKCSCCN.

A beta region spans residues M1 to K28. Residues C3, C5, C11, C13, C17, C19, C22, C24, C27, C31, C32, C34, C35, C39, C42, C46, C48, C56, C58, and C59 each coordinate a divalent metal cation. Positions K29 to N60 are alpha.

It belongs to the metallothionein superfamily. Type 1 family.

Functionally, metallothioneins have a high content of cysteine residues that bind various heavy metals. The sequence is that of Metallothionein (MT-A) from Ambystoma mexicanum (Axolotl).